A 275-amino-acid polypeptide reads, in one-letter code: 3-deoxy-manno-octulosonate cytidylyltransferase (275 aa).

The protein belongs to the KdsB family.

It is found in the cytoplasm. The enzyme catalyses 3-deoxy-alpha-D-manno-oct-2-ulosonate + CTP = CMP-3-deoxy-beta-D-manno-octulosonate + diphosphate. It participates in nucleotide-sugar biosynthesis; CMP-3-deoxy-D-manno-octulosonate biosynthesis; CMP-3-deoxy-D-manno-octulosonate from 3-deoxy-D-manno-octulosonate and CTP: step 1/1. The protein operates within bacterial outer membrane biogenesis; lipopolysaccharide biosynthesis. In terms of biological role, activates KDO (a required 8-carbon sugar) for incorporation into bacterial lipopolysaccharide in Gram-negative bacteria. This chain is 3-deoxy-manno-octulosonate cytidylyltransferase, found in Psychrobacter sp. (strain PRwf-1).